A 388-amino-acid polypeptide reads, in one-letter code: tRNA (guanine(26)-N(2))-dimethyltransferase (388 aa).

Residues 4–383 (RTIVEGTTKI…APIAEIKKII (380 aa)) enclose the Trm1 methyltransferase domain. S-adenosyl-L-methionine contacts are provided by Arg-41, Arg-78, Asp-94, and Ala-123. Positions 251, 254, 271, and 274 each coordinate Zn(2+).

The protein belongs to the class I-like SAM-binding methyltransferase superfamily. Trm1 family.

The catalysed reaction is guanosine(26) in tRNA + 2 S-adenosyl-L-methionine = N(2)-dimethylguanosine(26) in tRNA + 2 S-adenosyl-L-homocysteine + 2 H(+). Functionally, dimethylates a single guanine residue at position 26 of a number of tRNAs using S-adenosyl-L-methionine as donor of the methyl groups. The chain is tRNA (guanine(26)-N(2))-dimethyltransferase from Methanosarcina acetivorans (strain ATCC 35395 / DSM 2834 / JCM 12185 / C2A).